We begin with the raw amino-acid sequence, 254 residues long: N-acetylglucosamine-induced protein 1 (254 aa).

The protein resides in the cytoplasm. N-acetylglucosamine-induced protein which plays a role in the N-acetylglucosamine metabolic pathway. The chain is N-acetylglucosamine-induced protein 1 from Candida albicans (strain SC5314 / ATCC MYA-2876) (Yeast).